A 175-amino-acid chain; its full sequence is RNA pyrophosphohydrolase (175 aa).

A Nudix hydrolase domain is found at Gly-6–Lys-149. A Nudix box motif is present at residues Gly-38–Gly-59.

It belongs to the Nudix hydrolase family. RppH subfamily. It depends on a divalent metal cation as a cofactor.

Functionally, accelerates the degradation of transcripts by removing pyrophosphate from the 5'-end of triphosphorylated RNA, leading to a more labile monophosphorylated state that can stimulate subsequent ribonuclease cleavage. This chain is RNA pyrophosphohydrolase, found in Yersinia enterocolitica serotype O:8 / biotype 1B (strain NCTC 13174 / 8081).